We begin with the raw amino-acid sequence, 194 residues long: Thymidine kinase (194 aa).

Residues 15-22 (GCMFSGKT) and 88-91 (DELH) each bind ATP. Glu-89 acts as the Proton acceptor in catalysis. Positions 148, 151, 186, and 189 each coordinate Zn(2+).

This sequence belongs to the thymidine kinase family. As to quaternary structure, homotetramer.

Its subcellular location is the cytoplasm. The enzyme catalyses thymidine + ATP = dTMP + ADP + H(+). The chain is Thymidine kinase from Roseiflexus castenholzii (strain DSM 13941 / HLO8).